A 477-amino-acid chain; its full sequence is MAEETGALPSRTDFSAWYNEVIRRADIMDVRYPVKGLYVWYPFGFALRNHTYTLLRSLLNRDHEETLFPLLIPETEFMKEAEHIKGFEDEVYWVTHGGLSPLDVKLALRPTSETAIYPMYALWVRSHADLPLKLYQVVNTFRYETKHTRPLIRLREITSFMESHTVHTDWDDANKQVEYELGLATEFYRDLGVPIIISRRPDWDKFPGADFTMAIDAVMPDGRTLQIGTVHHLGDHFSTTYNITYEDVNGEQKLASQTCFGISERCIAAIIAVHGDDKGLVLPATVAPTQVVIIPIIVGKRGDEIMAAVEKLESELKAAGLRVKTDARDMRPGAKYYHWELHGVPLRVELGPRDLDNNQLVCANRLGVKTTIPRENAADSVKRLLDEAHDQILEKAEDHLSSHLKTVKTVDECNQSLEENIVIVHWCGEKACADKLEELTNSSLLGTGVRSKYVVDDEGPCIVCGKPGKTALVGRSY.

This sequence belongs to the class-II aminoacyl-tRNA synthetase family. ProS type 3 subfamily. Homodimer.

It localises to the cytoplasm. The enzyme catalyses tRNA(Pro) + L-proline + ATP = L-prolyl-tRNA(Pro) + AMP + diphosphate. In terms of biological role, catalyzes the attachment of proline to tRNA(Pro) in a two-step reaction: proline is first activated by ATP to form Pro-AMP and then transferred to the acceptor end of tRNA(Pro). The polypeptide is Proline--tRNA ligase (Methanocorpusculum labreanum (strain ATCC 43576 / DSM 4855 / Z)).